The following is a 274-amino-acid chain: Diaminopimelate epimerase (274 aa).

Substrate-binding residues include Asn11, Gln44, and Asn64. Cys73 (proton donor) is an active-site residue. Residues Gly74–Asn75, Asn157, Asn190, and Glu208–Arg209 each bind substrate. Cys217 serves as the catalytic Proton acceptor. Position 218–219 (Gly218–Ser219) interacts with substrate.

Belongs to the diaminopimelate epimerase family. In terms of assembly, homodimer.

It localises to the cytoplasm. The enzyme catalyses (2S,6S)-2,6-diaminopimelate = meso-2,6-diaminopimelate. It participates in amino-acid biosynthesis; L-lysine biosynthesis via DAP pathway; DL-2,6-diaminopimelate from LL-2,6-diaminopimelate: step 1/1. In terms of biological role, catalyzes the stereoinversion of LL-2,6-diaminopimelate (L,L-DAP) to meso-diaminopimelate (meso-DAP), a precursor of L-lysine and an essential component of the bacterial peptidoglycan. The chain is Diaminopimelate epimerase from Proteus mirabilis (strain HI4320).